A 131-amino-acid polypeptide reads, in one-letter code: Putative gene 51 protein (131 aa).

The sequence is that of Putative gene 51 protein (51) from Bacillus phage SP01 (Bacteriophage SP01).